The sequence spans 520 residues: Anthranilate synthase component 1 (520 aa).

Residues serine 40 and 291 to 293 (PYM) each bind L-tryptophan. Residue 328–329 (GT) participates in chorismate binding. Glutamate 361 contributes to the Mg(2+) binding site. Residues tyrosine 449, arginine 469, 483-485 (GAG), and glycine 485 each bind chorismate. Position 498 (glutamate 498) interacts with Mg(2+).

Belongs to the anthranilate synthase component I family. As to quaternary structure, heterotetramer consisting of two non-identical subunits: a beta subunit (TrpG) and a large alpha subunit (TrpE). Mg(2+) serves as cofactor.

The catalysed reaction is chorismate + L-glutamine = anthranilate + pyruvate + L-glutamate + H(+). Its pathway is amino-acid biosynthesis; L-tryptophan biosynthesis; L-tryptophan from chorismate: step 1/5. Its activity is regulated as follows. Feedback inhibited by tryptophan. Functionally, part of a heterotetrameric complex that catalyzes the two-step biosynthesis of anthranilate, an intermediate in the biosynthesis of L-tryptophan. In the first step, the glutamine-binding beta subunit (TrpG) of anthranilate synthase (AS) provides the glutamine amidotransferase activity which generates ammonia as a substrate that, along with chorismate, is used in the second step, catalyzed by the large alpha subunit of AS (TrpE) to produce anthranilate. In the absence of TrpG, TrpE can synthesize anthranilate directly from chorismate and high concentrations of ammonia. In Buchnera aphidicola subsp. Pemphigus spyrothecae, this protein is Anthranilate synthase component 1 (trpE).